Consider the following 476-residue polypeptide: 23S rRNA (uracil(1939)-C(5))-methyltransferase RlmD (476 aa).

The TRAM domain maps to 1–55 (MVDEVLKIESLDLEARGIARRDGKVVFVEGALPGERVYAATVRRKPSYEIARVET). Positions 68, 74, 77, and 156 each coordinate [4Fe-4S] cluster. Positions 265, 294, 299, 315, 343, and 364 each coordinate S-adenosyl-L-methionine. The Nucleophile role is filled by Cys-394.

It belongs to the class I-like SAM-binding methyltransferase superfamily. RNA M5U methyltransferase family. RlmD subfamily.

It catalyses the reaction uridine(1939) in 23S rRNA + S-adenosyl-L-methionine = 5-methyluridine(1939) in 23S rRNA + S-adenosyl-L-homocysteine + H(+). Functionally, catalyzes the formation of 5-methyl-uridine at position 1939 (m5U1939) in 23S rRNA. This chain is 23S rRNA (uracil(1939)-C(5))-methyltransferase RlmD, found in Bordetella avium (strain 197N).